Consider the following 275-residue polypeptide: 18S rRNA (guanine(1575)-N(7))-methyltransferase (275 aa).

The segment at 256–275 is disordered; the sequence is RGRKVAKDSKFTGRKRRHRF. The Nuclear localization signal motif lies at 257–264; it reads GRKVAKDS.

This sequence belongs to the class I-like SAM-binding methyltransferase superfamily. BUD23/WBSCR22 family. In terms of assembly, interacts with TRM112. Interacts with ECM16.

It is found in the cytoplasm. Its subcellular location is the nucleus. It catalyses the reaction guanosine(1575) in yeast 18S rRNA + S-adenosyl-L-methionine = N(7)-methylguanosine(1575) in yeast 18S rRNA + S-adenosyl-L-homocysteine. S-adenosyl-L-methionine-dependent methyltransferase that specifically methylates the N(7) position of guanine 1575 (m7G1575) in 18S rRNA. Requires the methyltransferase adapter protein TRM112 for full rRNA methyltransferase activity. Important for biogenesis end export of the 40S ribosomal subunit independent on its methyltransferase activity. Required for efficient cleavage of the primary 35S precursor rRNA at site A2. Involved in positioning the proximal bud pole signal. The polypeptide is 18S rRNA (guanine(1575)-N(7))-methyltransferase (BUD23) (Saccharomyces cerevisiae (strain ATCC 204508 / S288c) (Baker's yeast)).